The chain runs to 307 residues: uncharacterized protein (307 aa).

This is an uncharacterized protein from Bacillus subtilis (strain 168).